The sequence spans 88 residues: Small ribosomal subunit protein bS16 (88 aa).

The protein belongs to the bacterial ribosomal protein bS16 family.

The sequence is that of Small ribosomal subunit protein bS16 from Halothermothrix orenii (strain H 168 / OCM 544 / DSM 9562).